The following is a 226-amino-acid chain: Orotidine 5'-phosphate decarboxylase (226 aa).

Substrate is bound by residues Asp-8, Lys-30, 58–67, Thr-117, Arg-177, Gln-186, Gly-206, and Arg-207; that span reads DLKLYDIPNT. The active-site Proton donor is the Lys-60.

The protein belongs to the OMP decarboxylase family. Type 1 subfamily. As to quaternary structure, homodimer.

It carries out the reaction orotidine 5'-phosphate + H(+) = UMP + CO2. The protein operates within pyrimidine metabolism; UMP biosynthesis via de novo pathway; UMP from orotate: step 2/2. Its function is as follows. Catalyzes the decarboxylation of orotidine 5'-monophosphate (OMP) to uridine 5'-monophosphate (UMP). The polypeptide is Orotidine 5'-phosphate decarboxylase (Campylobacter concisus (strain 13826)).